The primary structure comprises 85 residues: U4-theraphotoxin-Hhn1a (85 aa).

The N-terminal stretch at Met1–Ala22 is a signal peptide. A propeptide spanning residues Glu23 to Arg48 is cleaved from the precursor. 3 disulfides stabilise this stretch: Cys52–Cys66, Cys56–Cys77, and Cys71–Cys82.

The protein belongs to the neurotoxin 12 (Hwtx-2) family. 02 (Hwtx-2) subfamily. As to quaternary structure, monomer. In terms of tissue distribution, expressed by the venom gland.

It is found in the secreted. In terms of biological role, neurotoxin active on both insects and mammals. The protein is U4-theraphotoxin-Hhn1a of Cyriopagopus hainanus (Chinese bird spider).